The primary structure comprises 576 residues: Citrinin biosynthesis transcriptional activator ctnR (576 aa).

Residues 1–27 (MLSHEMASTAHRQPSRPTTRQRQRTGR) form a disordered region. Positions 29 to 56 (CEECRRRKLRCDGQQPRCGVCVDSGVTC) form a DNA-binding region, zn(2)-C6 fungal-type. The segment at 102–148 (STPLTNDHHDGCSVSSASSRSDSNPPPTVSEPDMSLPNTTTSVSSAP) is disordered. Positions 114-124 (SVSSASSRSDS) are enriched in low complexity. Residues 137 to 148 (LPNTTTSVSSAP) are compositionally biased toward polar residues.

It localises to the nucleus. Its function is as follows. Transcription factor that regulates the expression of the gene cluster that mediates the biosynthesis of the mycotoxin citrinin, a hepato-nephrotoxic compound to humans due to inhibition of respiration complex III. In Monascus purpureus (Red mold), this protein is Citrinin biosynthesis transcriptional activator ctnR.